A 404-amino-acid polypeptide reads, in one-letter code: Metacaspase-1 (404 aa).

The tract at residues methionine 1–proline 97 is disordered. Active-site residues include histidine 195 and cysteine 251.

Belongs to the peptidase C14B family.

Involved in cell death (apoptosis). The sequence is that of Metacaspase-1 (casA) from Emericella nidulans (strain FGSC A4 / ATCC 38163 / CBS 112.46 / NRRL 194 / M139) (Aspergillus nidulans).